An 886-amino-acid chain; its full sequence is uncharacterized protein (886 aa).

Positions 1–20 (MKILKSLVLLVLFIVMPAKA) are cleaved as a signal peptide. The next 6 membrane-spanning stretches (helical) occupy residues 520-540 (VIIF…IEVI), 563-583 (TYFF…VVGA), 609-629 (LLFI…IITI), 647-667 (IIAF…IILM), 680-700 (ISTL…FLLI), and 771-791 (FLVL…SYGL).

This sequence belongs to the TrbL/VirB6 family.

The protein localises to the cell membrane. This is an uncharacterized protein from Rickettsia typhi (strain ATCC VR-144 / Wilmington).